The following is a 313-amino-acid chain: Interferon-inducible double-stranded RNA-dependent protein kinase activator A (313 aa).

Residues Met-1–Ser-18 show a composition bias toward basic and acidic residues. Residues Met-1–Phe-21 form a disordered region. 3 sufficient for self-association and interaction with TARBP2 regions span residues Met-1–Ala-103, Asn-102–Ile-195, and Ile-195–Lys-313. Position 18 is a phosphoserine (Ser-18). DRBM domains follow at residues Thr-34 to Ala-101, Asn-126 to Asn-194, and Asp-240 to Ile-308. Ser-167, Ser-246, and Ser-287 each carry phosphoserine.

It belongs to the PRKRA family. As to quaternary structure, homodimer. Interacts with EIF2AK2/PKR through its DRBM domains. Interacts with DICER1, AGO2 and TARBP2. Also able to interact with dsRNA. Interacts with UBC9. Forms a complex with UBC9 and p53/TP53. Interacts with DUS2L (via DRBM domain). Interacts with RIGI. (Microbial infection) Interacts with ebolavirus protein VP35; this interaction inhibits the interaction between RIGI and PRKRA. In addition, this interaction disrupts the interaction between VP35 and the viral polymerase L. So the VP35-PRKRA interaction plays a critical role in determining the outcome of ebolavirus infection. The interaction PRKRA-VP35 also prevents PRKRA binding to DICER1 and thus allows the virus to counteract host RNA silencing. In terms of assembly, (Microbial infection) Interacts with human herpesvirus 8 protein MTA/ORF57; this interaction inhibits stress granule formation. Post-translationally, phosphorylated at Ser-246 in unstressed cells and at Ser-287 in stressed cells. Phosphorylation at Ser-246 appears to be a prerequisite for subsequent phosphorylation at Ser-287. Phosphorylation at Ser-246 and Ser-287 are necessary for activation of EIF2AK2/PKR under conditions of stress.

It localises to the cytoplasm. The protein resides in the perinuclear region. In terms of biological role, activates EIF2AK2/PKR in the absence of double-stranded RNA (dsRNA), leading to phosphorylation of EIF2S1/EFI2-alpha and inhibition of translation and induction of apoptosis. Required for siRNA production by DICER1 and for subsequent siRNA-mediated post-transcriptional gene silencing. Does not seem to be required for processing of pre-miRNA to miRNA by DICER1. Promotes UBC9-p53/TP53 association and sumoylation and phosphorylation of p53/TP53 at 'Lys-386' at 'Ser-392' respectively and enhances its activity in a EIF2AK2/PKR-dependent manner. The protein is Interferon-inducible double-stranded RNA-dependent protein kinase activator A (PRKRA) of Homo sapiens (Human).